Reading from the N-terminus, the 199-residue chain is Protein-methionine-sulfoxide reductase heme-binding subunit MsrQ (199 aa).

5 helical membrane passes run 13–33 (VLLHLAGFLPLLWLILSVDQG), 79–99 (LLGLWCFFWATLHLVSYALLE), 120–140 (LGVISWLILLALAVTSPQIMM), 147–167 (WQKLHNFVYLVAILAPIHYLW), and 169–189 (VKTLSPQPILYALAALILLLF).

It belongs to the MsrQ family. In terms of assembly, heterodimer of a catalytic subunit (MsrP) and a heme-binding subunit (MsrQ). It depends on FMN as a cofactor. Heme b serves as cofactor.

Its subcellular location is the cell inner membrane. Functionally, part of the MsrPQ system that repairs oxidized periplasmic proteins containing methionine sulfoxide residues (Met-O), using respiratory chain electrons. Thus protects these proteins from oxidative-stress damage caused by reactive species of oxygen and chlorine generated by the host defense mechanisms. MsrPQ is essential for the maintenance of envelope integrity under bleach stress, rescuing a wide series of structurally unrelated periplasmic proteins from methionine oxidation. MsrQ provides electrons for reduction to the reductase catalytic subunit MsrP, using the quinone pool of the respiratory chain. This chain is Protein-methionine-sulfoxide reductase heme-binding subunit MsrQ, found in Pectobacterium carotovorum subsp. carotovorum (strain PC1).